The following is a 914-amino-acid chain: DNA mismatch repair protein MutS (914 aa).

The tract at residues 1 to 24 is disordered; it reads MDNKTDNKNNLTPQSAPSSAPHKE. The span at 8–18 shows a compositional bias: polar residues; sequence KNNLTPQSAPS. Residue 662–669 coordinates ATP; it reads GPNMGGKS.

Belongs to the DNA mismatch repair MutS family.

This protein is involved in the repair of mismatches in DNA. It is possible that it carries out the mismatch recognition step. This protein has a weak ATPase activity. In Bartonella henselae (strain ATCC 49882 / DSM 28221 / CCUG 30454 / Houston 1) (Rochalimaea henselae), this protein is DNA mismatch repair protein MutS.